The chain runs to 248 residues: Cutinase (248 aa).

The signal sequence occupies residues 1-17 (MRSLAILTTLLAGHAFA). A propeptide spanning residues 18-28 (YPKPAPQSVNR) is cleaved from the precursor. The interval 31 to 70 (WPSINEFLSELAKVMPIGDTITAACDLISDGEDAAASLFG) is lid covering the active site of the uncomplexed enzyme. Cystine bridges form between Cys-55–Cys-91 and Cys-79–Cys-153. The Nucleophile role is filled by Ser-164. A disulfide bond links Cys-212 and Cys-219. Asp-216 is a catalytic residue. His-229 acts as the Proton donor/acceptor in catalysis.

Belongs to the cutinase family.

Its subcellular location is the secreted. The catalysed reaction is cutin + H2O = cutin monomers.. Weakly inhibited by n-undecyl phosphonate (C11Y4). Activity unaffected by paraoxon. Catalyzes the hydrolysis of complex carboxylic polyesters found in the cell wall of plants. Degrades cutin, a macromolecule that forms the structure of the plant cuticle. The sequence is that of Cutinase from Hypocrea jecorina (strain QM6a) (Trichoderma reesei).